A 504-amino-acid polypeptide reads, in one-letter code: Trifunctional (S)-stylopine synthase/(S)-nandinine synthase/(S)-canadine synthase (504 aa).

A helical transmembrane segment spans residues 16 to 36 (SSTTTTTTILLSLLFTIFIIL). Cysteine 448 contributes to the heme binding site.

The protein belongs to the cytochrome P450 family. Requires heme as cofactor. As to expression, expressed in roots and at lower levels in stems, leaves and plantlets.

Its subcellular location is the endoplasmic reticulum membrane. The enzyme catalyses (S)-cheilanthifoline + reduced [NADPH--hemoprotein reductase] + O2 = (S)-stylopine + oxidized [NADPH--hemoprotein reductase] + 2 H2O + H(+). The catalysed reaction is (S)-tetrahydrocolumbamine + reduced [NADPH--hemoprotein reductase] + O2 = (S)-canadine + oxidized [NADPH--hemoprotein reductase] + 2 H2O + H(+). It catalyses the reaction (S)-scoulerine + reduced [NADPH--hemoprotein reductase] + O2 = (S)-nandinine + oxidized [NADPH--hemoprotein reductase] + 2 H2O + H(+). In terms of biological role, methylenedioxy bridge-forming cytochrome P450 involved in the biosynthesis of isoquinoline alkaloids. Converts (S)-cheilanthifoline to (S)-stylopine, (S)-scoulerine to (S)-nandinine and (S)-tetrahydrocolumbamine to (S)-canadine. Can be involved in both sanguinarine and berberine biosynthesis. Catalyzes an oxidative reaction that does not incorporate oxygen into the product. The chain is Trifunctional (S)-stylopine synthase/(S)-nandinine synthase/(S)-canadine synthase from Argemone mexicana (Mexican prickly poppy).